Reading from the N-terminus, the 434-residue chain is Glycylpeptide N-tetradecanoyltransferase 1 (434 aa).

The tract at residues 1-24 (MADNNSPPGSVEQKADQIVEANPL) is disordered. A2 carries the post-translational modification N-acetylalanine. Residues 48 to 51 (HKFW), 184 to 186 (LCV), and 192 to 196 (SKRLA) each bind tetradecanoyl-CoA. Residue L434 is the Proton acceptor; via carboxylate of the active site.

This sequence belongs to the NMT family. In terms of tissue distribution, expressed ubiquitously, with higher levels in young tissues (at protein level).

Its subcellular location is the cytoplasm. It carries out the reaction N-terminal glycyl-[protein] + tetradecanoyl-CoA = N-tetradecanoylglycyl-[protein] + CoA + H(+). Its function is as follows. Adds a myristoyl group to the N-terminal glycine residue of certain cellular proteins. Can also use decanoyl-CoA and lauroyl-CoA as substrates. The polypeptide is Glycylpeptide N-tetradecanoyltransferase 1 (NMT1) (Arabidopsis thaliana (Mouse-ear cress)).